Consider the following 229-residue polypeptide: Orotidine 5'-phosphate decarboxylase (229 aa).

Residues D10, K32, 59 to 68 (DLKFHDIPNT), T119, R180, Q189, G209, and R210 contribute to the substrate site. The active-site Proton donor is the K61.

It belongs to the OMP decarboxylase family. Type 1 subfamily. Homodimer.

It catalyses the reaction orotidine 5'-phosphate + H(+) = UMP + CO2. The protein operates within pyrimidine metabolism; UMP biosynthesis via de novo pathway; UMP from orotate: step 2/2. In terms of biological role, catalyzes the decarboxylation of orotidine 5'-monophosphate (OMP) to uridine 5'-monophosphate (UMP). In Legionella pneumophila (strain Paris), this protein is Orotidine 5'-phosphate decarboxylase.